The sequence spans 967 residues: Putative helicase MOV-10 (967 aa).

Positions 85 to 117 (ADQYRRPRTDTEVSAPAPGQQPSSGPPAPQSRA) are disordered. The span at 98–107 (SAPAPGQQPS) shows a compositional bias: low complexity. 516 to 523 (GPPGTGKT) contributes to the ATP binding site. Positions 638-641 (DECG) match the DEAG box motif.

Belongs to the DNA2/NAM7 helicase family. SDE3 subfamily.

It is found in the cytoplasm. Its subcellular location is the P-body. The protein localises to the cytoplasmic ribonucleoprotein granule. It localises to the stress granule. The protein resides in the nucleus. It carries out the reaction ATP + H2O = ADP + phosphate + H(+). Functionally, 5' to 3' RNA helicase that is involved in a number of cellular roles ranging from mRNA metabolism and translation, modulation of viral infectivity, inhibition of retrotransposition, or regulation of synaptic transmission. Plays an important role in innate antiviral immunity by promoting type I interferon production. Required for microRNA (miRNA)-mediated gene silencing by the RNA-induced silencing complex (RISC). Required for both miRNA-mediated translational repression and miRNA-mediated cleavage of complementary mRNAs by RISC. In cooperation with FMR1, regulates miRNA-mediated translational repression by AGO2. Restricts retrotransposition of long interspersed element-1 (LINE-1). Required for embryonic viability and for normal central nervous system development and function. May function as a messenger ribonucleoprotein (mRNP) clearance factor. This is Putative helicase MOV-10 (MOV10) from Gallus gallus (Chicken).